A 207-amino-acid chain; its full sequence is Probable RNA 2'-phosphotransferase (207 aa).

Belongs to the KptA/TPT1 family.

In terms of biological role, removes the 2'-phosphate from RNA via an intermediate in which the phosphate is ADP-ribosylated by NAD followed by a presumed transesterification to release the RNA and generate ADP-ribose 1''-2''-cyclic phosphate (APPR&gt;P). May function as an ADP-ribosylase. This Methanosarcina mazei (strain ATCC BAA-159 / DSM 3647 / Goe1 / Go1 / JCM 11833 / OCM 88) (Methanosarcina frisia) protein is Probable RNA 2'-phosphotransferase.